The sequence spans 382 residues: Methylthioribose-1-phosphate isomerase (382 aa).

Asp-258 acts as the Proton donor in catalysis.

This sequence belongs to the eIF-2B alpha/beta/delta subunits family. MtnA subfamily.

It localises to the cytoplasm. Its subcellular location is the nucleus. It carries out the reaction 5-(methylsulfanyl)-alpha-D-ribose 1-phosphate = 5-(methylsulfanyl)-D-ribulose 1-phosphate. Its pathway is amino-acid biosynthesis; L-methionine biosynthesis via salvage pathway; L-methionine from S-methyl-5-thio-alpha-D-ribose 1-phosphate: step 1/6. Its function is as follows. Catalyzes the interconversion of methylthioribose-1-phosphate (MTR-1-P) into methylthioribulose-1-phosphate (MTRu-1-P). The protein is Methylthioribose-1-phosphate isomerase of Laccaria bicolor (strain S238N-H82 / ATCC MYA-4686) (Bicoloured deceiver).